The sequence spans 33 residues: Brevinin-2Ef (33 aa).

A disulfide bridge connects residues Cys27 and Cys33.

As to expression, expressed by the skin glands.

It localises to the secreted. Functionally, shows antibacterial activity against representative Gram-negative and Gram-positive bacterial species, and hemolytic activity. This Pelophylax ridibundus (Marsh frog) protein is Brevinin-2Ef.